A 275-amino-acid chain; its full sequence is Diaminopimelate epimerase (275 aa).

Substrate contacts are provided by Asn-12, Gln-45, and Asn-65. Cys-74 functions as the Proton donor in the catalytic mechanism. Residues 75–76, Asn-158, Asn-191, and 209–210 each bind substrate; these read GN and ER. The Proton acceptor role is filled by Cys-218. 219 to 220 provides a ligand contact to substrate; that stretch reads GS.

This sequence belongs to the diaminopimelate epimerase family. As to quaternary structure, homodimer.

Its subcellular location is the cytoplasm. The catalysed reaction is (2S,6S)-2,6-diaminopimelate = meso-2,6-diaminopimelate. The protein operates within amino-acid biosynthesis; L-lysine biosynthesis via DAP pathway; DL-2,6-diaminopimelate from LL-2,6-diaminopimelate: step 1/1. Functionally, catalyzes the stereoinversion of LL-2,6-diaminopimelate (L,L-DAP) to meso-diaminopimelate (meso-DAP), a precursor of L-lysine and an essential component of the bacterial peptidoglycan. This is Diaminopimelate epimerase from Shewanella amazonensis (strain ATCC BAA-1098 / SB2B).